The chain runs to 486 residues: UDP-N-acetylmuramoyl-L-alanyl-D-glutamate--2,6-diaminopimelate ligase (486 aa).

Ser30 serves as a coordination point for UDP-N-acetyl-alpha-D-muramoyl-L-alanyl-D-glutamate. Residue Gly111–Thr117 coordinates ATP. UDP-N-acetyl-alpha-D-muramoyl-L-alanyl-D-glutamate contacts are provided by residues Thr153–Thr154, Ser180, Gln186, and Arg188. The residue at position 220 (Lys220) is an N6-carboxylysine. Meso-2,6-diaminopimelate contacts are provided by residues Arg378, Asp402–Arg405, Gly455, and Glu459. The Meso-diaminopimelate recognition motif signature appears at Asp402–Arg405.

It belongs to the MurCDEF family. MurE subfamily. The cofactor is Mg(2+). Post-translationally, carboxylation is probably crucial for Mg(2+) binding and, consequently, for the gamma-phosphate positioning of ATP.

The protein resides in the cytoplasm. The enzyme catalyses UDP-N-acetyl-alpha-D-muramoyl-L-alanyl-D-glutamate + meso-2,6-diaminopimelate + ATP = UDP-N-acetyl-alpha-D-muramoyl-L-alanyl-gamma-D-glutamyl-meso-2,6-diaminopimelate + ADP + phosphate + H(+). It participates in cell wall biogenesis; peptidoglycan biosynthesis. Its function is as follows. Catalyzes the addition of meso-diaminopimelic acid to the nucleotide precursor UDP-N-acetylmuramoyl-L-alanyl-D-glutamate (UMAG) in the biosynthesis of bacterial cell-wall peptidoglycan. The sequence is that of UDP-N-acetylmuramoyl-L-alanyl-D-glutamate--2,6-diaminopimelate ligase from Parabacteroides distasonis (strain ATCC 8503 / DSM 20701 / CIP 104284 / JCM 5825 / NCTC 11152).